The primary structure comprises 97 residues: U-scoloptoxin(10)-Ssd2a (97 aa).

A signal peptide spans 1-23 (MNKSMLIFFTILFLTYIIEEKEA).

Post-translationally, contains 3 disulfide bonds. Expressed by the venom gland.

It is found in the secreted. In Scolopendra dehaani (Thai centipede), this protein is U-scoloptoxin(10)-Ssd2a.